A 132-amino-acid chain; its full sequence is RING-H2 finger protein ATL39 (132 aa).

Residues 10 to 30 (TIVFAFASIGFIAFYIINYYI) form a helical membrane-spanning segment. An RING-type; atypical zinc finger spans residues 85 to 127 (CVVCLNEFKDDETLRLVPPCVHVFHADCVDIWLSHSSTCPICR).

This sequence belongs to the RING-type zinc finger family. ATL subfamily.

Its subcellular location is the membrane. It carries out the reaction S-ubiquitinyl-[E2 ubiquitin-conjugating enzyme]-L-cysteine + [acceptor protein]-L-lysine = [E2 ubiquitin-conjugating enzyme]-L-cysteine + N(6)-ubiquitinyl-[acceptor protein]-L-lysine.. The protein operates within protein modification; protein ubiquitination. The sequence is that of RING-H2 finger protein ATL39 (ATL39) from Arabidopsis thaliana (Mouse-ear cress).